The following is a 131-amino-acid chain: uncharacterized protein (131 aa).

The CMP/dCMP-type deaminase domain occupies 1 to 116 (MYMARMLSEM…EMLEASSIQC (116 aa)).

This is an uncharacterized protein from Caenorhabditis elegans.